The primary structure comprises 417 residues: MGKRWDSNSSGSWDHIWSGNDTQHPWYSDINITYMNYYLHQPHVTAVFISSYFLIFFLCMVGNTVVCFVVIRNRYMHTVTNFFIFNLAISDLLVGIFCMPITLLDNIIAGWPFGSSMCKISGLVQGISVAASVFTLVAIAVDRFRCVVYPFKPKLTVKTAFVMIVIIWGLAITIMTPSAIMLHVQEEKYYRVRLSSHNKTSTVYWCREDWPNQEMRRIYTTVLFATIYLAPLSLIVIMYARIGASLFKTSAHSTGKQRLEQWHVSKKKQKVIKMLLTVALLFILSWLPLWTLMMLSDYADLSPNKLRVINIYVYPFAHWLAFCNSSVNPIIYGFFNENFRSGFQDAFQFCQKKVKPQEAYGLRAKRNLDINTSGLLVHEPASQNPSGENLGCRKSADNPTQESLMEETGEATNSTET.

At 1 to 45 (MGKRWDSNSSGSWDHIWSGNDTQHPWYSDINITYMNYYLHQPHVT) the chain is on the extracellular side. Asn8, Asn20, and Asn31 each carry an N-linked (GlcNAc...) asparagine glycan. The chain crosses the membrane as a helical span at residues 46-66 (AVFISSYFLIFFLCMVGNTVV). Residues 67–82 (CFVVIRNRYMHTVTNF) are Cytoplasmic-facing. A helical transmembrane segment spans residues 83 to 103 (FIFNLAISDLLVGIFCMPITL). The Extracellular portion of the chain corresponds to 104 to 119 (LDNIIAGWPFGSSMCK). Residues Cys118 and Cys206 are joined by a disulfide bond. The helical transmembrane segment at 120–140 (ISGLVQGISVAASVFTLVAIA) threads the bilayer. The Cytoplasmic portion of the chain corresponds to 141–160 (VDRFRCVVYPFKPKLTVKTA). Residues 161–181 (FVMIVIIWGLAITIMTPSAIM) form a helical membrane-spanning segment. At 182–217 (LHVQEEKYYRVRLSSHNKTSTVYWCREDWPNQEMRR) the chain is on the extracellular side. N-linked (GlcNAc...) asparagine glycosylation occurs at Asn198. Residues 218–238 (IYTTVLFATIYLAPLSLIVIM) traverse the membrane as a helical segment. Over 239 to 274 (YARIGASLFKTSAHSTGKQRLEQWHVSKKKQKVIKM) the chain is Cytoplasmic. Residues 275-295 (LLTVALLFILSWLPLWTLMML) form a helical membrane-spanning segment. The Extracellular segment spans residues 296-310 (SDYADLSPNKLRVIN). The helical transmembrane segment at 311–331 (IYVYPFAHWLAFCNSSVNPII) threads the bilayer. Residues 332–417 (YGFFNENFRS…TGEATNSTET (86 aa)) lie on the Cytoplasmic side of the membrane. A disordered region spans residues 378–417 (HEPASQNPSGENLGCRKSADNPTQESLMEETGEATNSTET).

It belongs to the G-protein coupled receptor 1 family.

It is found in the cell membrane. Functionally, receptor for NPAF (A-18-F-amide) and NPFF (F-8-F-amide) neuropeptides, also known as morphine-modulating peptides. Can also be activated by a variety of naturally occurring or synthetic FMRF-amide like ligands. This receptor mediates its action by association with G proteins that activate a phosphatidylinositol-calcium second messenger system. The protein is Neuropeptide FF receptor 2 (Npffr2) of Rattus norvegicus (Rat).